Reading from the N-terminus, the 85-residue chain is Arminin 2b (85 aa).

Positions 1–18 (MKTVFAILFLAFIALTYA) are cleaved as a signal peptide. The propeptide occupies 19-57 (RSYEDVKEEIKNEIEKEILEDLEEESDELNDKSKEINDA). A82 carries the alanine amide modification.

The protein belongs to the arminin family. In terms of tissue distribution, expressed in entodermal epithelium along the body column.

Its subcellular location is the secreted. It is found in the target cell membrane. Functionally, antimicrobial peptide with a broad-spectrum antimicrobial activity. Keeps its antibacterial activity under a wide range of salt concentrations that mimic physiological conditions of human blood, which is surprising, since Hydra is an obligate freshwater animal with nearly no salt tolerance. Does not affect red blood cells. The polypeptide is Arminin 2b (Hydra vulgaris (Hydra)).